A 635-amino-acid chain; its full sequence is Threonine--tRNA ligase (635 aa).

Residues 1–144 are editing domain; that stretch reads MQLLLIHSDY…RTIRLEGAVP (144 aa). The tract at residues 215-514 is catalytic; sequence PHVELMRRLE…AEEGKVPNLP (300 aa). Residues C307, H359, and H483 each coordinate Zn(2+).

It belongs to the class-II aminoacyl-tRNA synthetase family. In terms of assembly, homodimer. Requires Zn(2+) as cofactor.

Its subcellular location is the cytoplasm. It catalyses the reaction tRNA(Thr) + L-threonine + ATP = L-threonyl-tRNA(Thr) + AMP + diphosphate + H(+). In terms of biological role, catalyzes the attachment of threonine to tRNA(Thr) in a two-step reaction: L-threonine is first activated by ATP to form Thr-AMP and then transferred to the acceptor end of tRNA(Thr). Also edits incorrectly charged L-seryl-tRNA(Thr). This is Threonine--tRNA ligase from Methanococcoides burtonii (strain DSM 6242 / NBRC 107633 / OCM 468 / ACE-M).